The sequence spans 118 residues: Large ribosomal subunit protein bL17 (118 aa).

The protein belongs to the bacterial ribosomal protein bL17 family. In terms of assembly, part of the 50S ribosomal subunit. Contacts protein L32.

The polypeptide is Large ribosomal subunit protein bL17 (Thermus thermophilus (strain ATCC BAA-163 / DSM 7039 / HB27)).